Consider the following 33-residue polypeptide: Dermaseptin-H8 (33 aa).

Position 33 is a leucine amide (Leu33).

In terms of tissue distribution, expressed by the skin glands.

It is found in the secreted. In terms of biological role, has antimicrobial activity. The sequence is that of Dermaseptin-H8 from Pithecopus hypochondrialis (Orange-legged leaf frog).